We begin with the raw amino-acid sequence, 251 residues long: HTH-type transcriptional regulator UlaR (251 aa).

An HTH deoR-type domain is found at 3–58; sequence EAQRHQILLEMLAQLGFVTVEKVVERLGISPATARRDINKLGESGKLKKVRNGAEA. Positions 20–39 form a DNA-binding region, H-T-H motif; sequence VTVEKVVERLGISPATARRD.

The protein localises to the cytoplasm. Its function is as follows. Represses ulaG and the ulaABCDEF operon. This is HTH-type transcriptional regulator UlaR from Shigella flexneri.